We begin with the raw amino-acid sequence, 164 residues long: R-phycoerythrin alpha chain (164 aa).

(2R,3E)-phycoerythrobilin-binding residues include cysteine 82 and cysteine 139.

It belongs to the phycobiliprotein family. Heterodimer of an alpha and a beta chain. Contains two covalently linked bilin chromophores.

The protein resides in the plastid. The protein localises to the chloroplast thylakoid membrane. In terms of biological role, light-harvesting photosynthetic bile pigment-protein from the phycobiliprotein complex. The polypeptide is R-phycoerythrin alpha chain (cpeA) (Porphyra purpurea (Red seaweed)).